The chain runs to 308 residues: Urease subunit beta (308 aa).

The Urease domain maps to 131-308 (GGIDTHIHFI…STNPTIPFTK (178 aa)). Ni(2+) is bound by residues His-136, His-138, Lys-219, His-248, and His-274. Position 219 is an N6-carboxylysine (Lys-219).

It belongs to the metallo-dependent hydrolases superfamily. Urease alpha subunit family. Heterohexamer of 3 UreA (alpha) and 3 UreB (beta) subunits. The cofactor is Ni cation. In terms of processing, carboxylation allows a single lysine to coordinate two nickel ions.

The protein resides in the cytoplasm. It catalyses the reaction urea + 2 H2O + H(+) = hydrogencarbonate + 2 NH4(+). Its pathway is nitrogen metabolism; urea degradation; CO(2) and NH(3) from urea (urease route): step 1/1. This is Urease subunit beta (ureB) from Helicobacter mustelae.